The chain runs to 83 residues: MAHKKGQGASRNGRDSESKRLGLKVGAGQRVSTGSILVRQRGTKWHPAVNVGRGKDDTLFALVDGIVVMKKTDRTYVSVIPQA.

The segment at M1–V25 is disordered.

It belongs to the bacterial ribosomal protein bL27 family.

The protein is Large ribosomal subunit protein bL27 of Chlamydia muridarum (strain MoPn / Nigg).